A 451-amino-acid chain; its full sequence is Protein tweety homolog 1-B (451 aa).

At 1 to 43 (MSTSHGYRASWWTYILHQVPHTNFQFEVVDNQFAPQEWSYQQA) the chain is on the extracellular side. Residues 44–64 (LLFLASIAGLCLAISLVLICV) form a helical membrane-spanning segment. Residues 65–86 (YLIKFCCCASQEDDDSKSHRVC) lie on the Cytoplasmic side of the membrane. Residues 87-107 (CVTWSCVAAVIICCAGIGIGF) traverse the membrane as a helical segment. The Extracellular segment spans residues 108–214 (YGNSETNDGV…QVNFIEDYRW (107 aa)). Residue asparagine 128 is glycosylated (N-linked (GlcNAc...) asparagine). The helical transmembrane segment at 215-235 (LAYILLLLLDLIICLFTLLSL) threads the bilayer. At 236–240 (AKQIK) the chain is on the cytoplasmic side. Residues 241-261 (WLVIVMTVVSFFVLLLSWGSM) form a helical membrane-spanning segment. At 262-390 (GLEMATAVGL…LKGLCYDGME (129 aa)) the chain is on the extracellular side. 2 disulfides stabilise this stretch: cysteine 275-cysteine 385 and cysteine 303-cysteine 370. 2 N-linked (GlcNAc...) asparagine glycosylation sites follow: asparagine 284 and asparagine 355. A helical transmembrane segment spans residues 391–411 (GILFLLLFSFLSALSFTAAVC). The Cytoplasmic portion of the chain corresponds to 412–451 (SLPRAWKRFRNRDLDYDDMDEDDPFNPQESKRFVQWQSSI).

Belongs to the tweety family. Homotetramer; disulfide-linked. Homodimer.

It is found in the cell membrane. The catalysed reaction is chloride(in) = chloride(out). It catalyses the reaction L-glutamate(out) = L-glutamate(in). May act as a calcium-independent, swelling-dependent volume-regulated anion channel (VRAC-swell) which plays a pivotal role in the process of regulatory volume decrease (RVD) in the brain through the efflux of anions like chloride and organic osmolytes like glutamate. In Xenopus laevis (African clawed frog), this protein is Protein tweety homolog 1-B (ttyh1-b).